The following is a 148-amino-acid chain: UPF0756 membrane protein NMC1845 (148 aa).

4 consecutive transmembrane segments (helical) span residues 13-35 (LILL…LLLM), 50-70 (HGLN…LVSG), 80-100 (FLNF…WLAG), and 121-141 (VIGV…AGIL).

It belongs to the UPF0756 family.

It localises to the cell membrane. The protein is UPF0756 membrane protein NMC1845 of Neisseria meningitidis serogroup C / serotype 2a (strain ATCC 700532 / DSM 15464 / FAM18).